A 380-amino-acid chain; its full sequence is Protein GOLM2 (380 aa).

The residue at position 1 (Met-1) is an N-acetylmethionine. At 1–14 the chain is on the cytoplasmic side; it reads MVGFGANRRAGRLP. Residues 15–35 traverse the membrane as a helical; Signal-anchor for type II membrane protein segment; sequence SLVLAVLLVVIAVLAFNYWSI. Residues 35–195 are a coiled coil; it reads ISSRHVLLQE…QFLQEQKQEA (161 aa). Over 36 to 380 the chain is Lumenal; it reads SSRHVLLQEE…YGKQRFNDAL (345 aa). Basic and acidic residues-rich tracts occupy residues 192 to 212 and 227 to 247; these read KQEA…DNHA and KNEE…KRGG. The segment at 192–254 is disordered; sequence KQEAHKFESK…RGGDAGMPGI (63 aa). 2 positions are modified to phosphoserine: Ser-233 and Ser-275. A disordered region spans residues 280-380; that stretch reads ESHQVISHLP…YGKQRFNDAL (101 aa). Polar residues predominate over residues 305–321; it reads NHNGNSRTSKQNPSNPL. Basic and acidic residues predominate over residues 344 to 380; the sequence is ATKDRAGDFHKLKQNDEERELQMDPADYGKQRFNDAL.

Belongs to the GOLM family.

The protein resides in the membrane. The polypeptide is Protein GOLM2 (GOLM2) (Bos taurus (Bovine)).